The chain runs to 841 residues: Serine/threonine-protein kinase/endoribonuclease IRE1a (841 aa).

The signal sequence occupies residues methionine 1–alanine 30. Residues aspartate 31 to glutamine 323 lie on the Lumenal side of the membrane. Asparagine 100, asparagine 104, asparagine 119, asparagine 132, and asparagine 221 each carry an N-linked (GlcNAc...) asparagine glycan. Residues tryptophan 324–isoleucine 344 form a helical membrane-spanning segment. Topologically, residues lysine 345–isoleucine 841 are cytoplasmic. A disordered region spans residues serine 352 to glutamine 382. The Protein kinase domain occupies phenylalanine 414 to phenylalanine 704. Residues isoleucine 420–valine 428 and lysine 442 contribute to the ATP site. Residue aspartate 570 is the Proton acceptor of the active site. The region spanning serine 707–cysteine 838 is the KEN domain.

Belongs to the protein kinase superfamily. Ser/Thr protein kinase family. Homodimer; disulfide-linked. Dimer formation is driven by hydrophobic interactions within the N-terminal luminal domains and stabilized by disulfide bridges. Mg(2+) serves as cofactor. Post-translationally, autophosphorylated. Ubiquitous. Detected in the vascular bundles of young plants, leaves, roots, seedlings and in the receptacles of flowers and vascular bundles of the petals.

It localises to the endoplasmic reticulum membrane. The enzyme catalyses L-seryl-[protein] + ATP = O-phospho-L-seryl-[protein] + ADP + H(+). The catalysed reaction is L-threonyl-[protein] + ATP = O-phospho-L-threonyl-[protein] + ADP + H(+). The kinase domain is activated by trans-autophosphorylation. Kinase activity is required for activation of the endoribonuclease domain. In terms of biological role, senses unfolded proteins in the lumen of the endoplasmic reticulum via its N-terminal domain which leads to enzyme auto-activation. The active endoribonuclease domain splices bZIP60 mRNA to generate a new C-terminus, converting it into a potent unfolded-protein response transcriptional activator which then induces transcription of UPR target genes. Involved in organ growth regulation. Plays a role in plant immunity and abiotic stress responses. In Arabidopsis thaliana (Mouse-ear cress), this protein is Serine/threonine-protein kinase/endoribonuclease IRE1a (IRE1A).